Reading from the N-terminus, the 402-residue chain is S-adenosylmethionine synthase (402 aa).

Residue 137–142 (GQGSAD) coordinates ATP.

It belongs to the AdoMet synthase 2 family. It depends on Mg(2+) as a cofactor.

The enzyme catalyses L-methionine + ATP + H2O = S-adenosyl-L-methionine + phosphate + diphosphate. The protein operates within amino-acid biosynthesis; S-adenosyl-L-methionine biosynthesis; S-adenosyl-L-methionine from L-methionine: step 1/1. Functionally, catalyzes the formation of S-adenosylmethionine from methionine and ATP. This is S-adenosylmethionine synthase from Pyrobaculum calidifontis (strain DSM 21063 / JCM 11548 / VA1).